Reading from the N-terminus, the 220-residue chain is Adenylate kinase (220 aa).

Residue 13–18 (GAGKGT) coordinates ATP. Residues 33–62 (STGDILRAAVKEGTPLGLEAQSYMNRGALV) are NMP. Residues threonine 34, arginine 39, 60–62 (ALV), 88–91 (GFPR), and glutamine 95 each bind AMP. Residues 129–170 (GRRTCPLCKRIFHVRFNPPPAAPPFCTDHTDCPSELVQRPDD) form an LID region. Position 130 (arginine 130) interacts with ATP. The Zn(2+) site is built by cysteine 133 and cysteine 136. 139–140 (IF) is a binding site for ATP. Zn(2+) is bound by residues aspartate 156 and cysteine 160. AMP is bound by residues arginine 167 and arginine 178. Residue arginine 206 coordinates ATP.

This sequence belongs to the adenylate kinase family. As to quaternary structure, monomer.

The protein resides in the cytoplasm. It catalyses the reaction AMP + ATP = 2 ADP. It functions in the pathway purine metabolism; AMP biosynthesis via salvage pathway; AMP from ADP: step 1/1. Its function is as follows. Catalyzes the reversible transfer of the terminal phosphate group between ATP and AMP. Plays an important role in cellular energy homeostasis and in adenine nucleotide metabolism. The protein is Adenylate kinase of Gloeobacter violaceus (strain ATCC 29082 / PCC 7421).